A 279-amino-acid polypeptide reads, in one-letter code: Diaminopimelate epimerase (279 aa).

The substrate site is built by asparagine 13 and asparagine 66. Cysteine 75 acts as the Proton donor in catalysis. Substrate contacts are provided by residues 76–77, asparagine 164, asparagine 197, and 215–216; these read GN and ER. Cysteine 224 serves as the catalytic Proton acceptor. Substrate is bound at residue 225–226; that stretch reads GT.

This sequence belongs to the diaminopimelate epimerase family. Homodimer.

The protein resides in the cytoplasm. It carries out the reaction (2S,6S)-2,6-diaminopimelate = meso-2,6-diaminopimelate. It functions in the pathway amino-acid biosynthesis; L-lysine biosynthesis via DAP pathway; DL-2,6-diaminopimelate from LL-2,6-diaminopimelate: step 1/1. Functionally, catalyzes the stereoinversion of LL-2,6-diaminopimelate (L,L-DAP) to meso-diaminopimelate (meso-DAP), a precursor of L-lysine and an essential component of the bacterial peptidoglycan. The protein is Diaminopimelate epimerase of Brachyspira hyodysenteriae (strain ATCC 49526 / WA1).